The primary structure comprises 505 residues: 2,3-bisphosphoglycerate-independent phosphoglycerate mutase (505 aa).

Mn(2+)-binding residues include D13 and S63. The Phosphoserine intermediate role is filled by S63. Substrate-binding positions include H124, 153-154, R183, R189, 254-257, and K329; these read RD and RADR. Residues D395, H399, D436, H437, and H455 each contribute to the Mn(2+) site.

Belongs to the BPG-independent phosphoglycerate mutase family. Monomer. Requires Mn(2+) as cofactor.

The enzyme catalyses (2R)-2-phosphoglycerate = (2R)-3-phosphoglycerate. The protein operates within carbohydrate degradation; glycolysis; pyruvate from D-glyceraldehyde 3-phosphate: step 3/5. Functionally, catalyzes the interconversion of 2-phosphoglycerate and 3-phosphoglycerate. The polypeptide is 2,3-bisphosphoglycerate-independent phosphoglycerate mutase (Agrobacterium fabrum (strain C58 / ATCC 33970) (Agrobacterium tumefaciens (strain C58))).